The primary structure comprises 70 residues: Cytochrome c oxidase subunit 8B, mitochondrial (70 aa).

The N-terminal 24 residues, methionine 1–histidine 24, are a transit peptide targeting the mitochondrion. At valine 25–serine 35 the chain is on the mitochondrial matrix side. The chain crosses the membrane as a helical span at residues proline 36 to serine 59. Residues histidine 60–threonine 70 lie on the Mitochondrial intermembrane side of the membrane.

It belongs to the cytochrome c oxidase VIII family. As to quaternary structure, component of the cytochrome c oxidase (complex IV, CIV), a multisubunit enzyme composed of 14 subunits. The complex is composed of a catalytic core of 3 subunits MT-CO1, MT-CO2 and MT-CO3, encoded in the mitochondrial DNA, and 11 supernumerary subunits COX4I, COX5A, COX5B, COX6A, COX6B, COX6C, COX7A, COX7B, COX7C, COX8 and NDUFA4, which are encoded in the nuclear genome. The complex exists as a monomer or a dimer and forms supercomplexes (SCs) in the inner mitochondrial membrane with NADH-ubiquinone oxidoreductase (complex I, CI) and ubiquinol-cytochrome c oxidoreductase (cytochrome b-c1 complex, complex III, CIII), resulting in different assemblies (supercomplex SCI(1)III(2)IV(1) and megacomplex MCI(2)III(2)IV(2)).

The protein resides in the mitochondrion inner membrane. It functions in the pathway energy metabolism; oxidative phosphorylation. In terms of biological role, component of the cytochrome c oxidase, the last enzyme in the mitochondrial electron transport chain which drives oxidative phosphorylation. The respiratory chain contains 3 multisubunit complexes succinate dehydrogenase (complex II, CII), ubiquinol-cytochrome c oxidoreductase (cytochrome b-c1 complex, complex III, CIII) and cytochrome c oxidase (complex IV, CIV), that cooperate to transfer electrons derived from NADH and succinate to molecular oxygen, creating an electrochemical gradient over the inner membrane that drives transmembrane transport and the ATP synthase. Cytochrome c oxidase is the component of the respiratory chain that catalyzes the reduction of oxygen to water. Electrons originating from reduced cytochrome c in the intermembrane space (IMS) are transferred via the dinuclear copper A center (CU(A)) of subunit 2 and heme A of subunit 1 to the active site in subunit 1, a binuclear center (BNC) formed by heme A3 and copper B (CU(B)). The BNC reduces molecular oxygen to 2 water molecules using 4 electrons from cytochrome c in the IMS and 4 protons from the mitochondrial matrix. In Carlito syrichta (Philippine tarsier), this protein is Cytochrome c oxidase subunit 8B, mitochondrial (COX8B).